The primary structure comprises 80 residues: Small ribosomal subunit protein bS18 (80 aa).

The protein belongs to the bacterial ribosomal protein bS18 family. As to quaternary structure, part of the 30S ribosomal subunit. Forms a tight heterodimer with protein bS6.

Binds as a heterodimer with protein bS6 to the central domain of the 16S rRNA, where it helps stabilize the platform of the 30S subunit. This is Small ribosomal subunit protein bS18 from Staphylococcus aureus (strain Mu3 / ATCC 700698).